A 174-amino-acid polypeptide reads, in one-letter code: ATP synthase subunit d, mitochondrial (174 aa).

The residue at position 2 (S2) is an N-acetylserine.

The protein belongs to the ATPase d subunit family. As to quaternary structure, F-type ATPases have 2 components, CF(1) - the catalytic core - and CF(0) - the membrane proton channel. In yeast, the dimeric form of ATP synthase consists of 17 polypeptides: alpha, beta, gamma, delta, epsilon, 4 (B), 5 (OSCP), 6 (A), 8, 9 (C), d, E (Tim11), f, g, h, i/j and k.

It localises to the mitochondrion. Its subcellular location is the mitochondrion inner membrane. Its function is as follows. Mitochondrial membrane ATP synthase (F(1)F(0) ATP synthase or Complex V) produces ATP from ADP in the presence of a proton gradient across the membrane which is generated by electron transport complexes of the respiratory chain. F-type ATPases consist of two structural domains, F(1) - containing the extramembraneous catalytic core, and F(0) - containing the membrane proton channel, linked together by a central stalk and a peripheral stalk. During catalysis, ATP synthesis in the catalytic domain of F(1) is coupled via a rotary mechanism of the central stalk subunits to proton translocation. Part of the complex F(0) domain and the peripheric stalk, which acts as a stator to hold the catalytic alpha(3)beta(3) subcomplex and subunit a/ATP6 static relative to the rotary elements. The protein is ATP synthase subunit d, mitochondrial (ATP7) of Saccharomyces cerevisiae (strain ATCC 204508 / S288c) (Baker's yeast).